We begin with the raw amino-acid sequence, 117 residues long: Large ribosomal subunit protein bL19 (117 aa).

It belongs to the bacterial ribosomal protein bL19 family.

Functionally, this protein is located at the 30S-50S ribosomal subunit interface and may play a role in the structure and function of the aminoacyl-tRNA binding site. This chain is Large ribosomal subunit protein bL19, found in Sorangium cellulosum (strain So ce56) (Polyangium cellulosum (strain So ce56)).